Consider the following 520-residue polypeptide: Cytochrome P450 monooxygenase 176 (520 aa).

N-linked (GlcNAc...) asparagine glycosylation occurs at N6. A helical transmembrane segment spans residues L10 to I27. N-linked (GlcNAc...) asparagine glycosylation is found at N141 and N270. C445 is a binding site for heme. N-linked (GlcNAc...) asparagine glycosylation is present at N517.

This sequence belongs to the cytochrome P450 family. Heme serves as cofactor.

It localises to the membrane. It functions in the pathway secondary metabolite biosynthesis. Functionally, cytochrome P450 monooxygenase that is able to use delta(6)-protoilludene as a substrate to produce delta(6)-protoilludene-5-ol and an unidentified hydroxyprotoilludene. Is also able to use phenanthrene as a substrate for oxidation. The chain is Cytochrome P450 monooxygenase 176 from Postia placenta (strain ATCC 44394 / Madison 698-R) (Brown rot fungus).